We begin with the raw amino-acid sequence, 744 residues long: Dolasta-1(15),8-diene synthase (744 aa).

The segment at 1-344 is terpene cyclase; it reads MASTMMNYQD…RRYNPAAPLP (344 aa). Residues Asp108 and Asp112 each contribute to the Mg(2+) site. Substrate-binding positions include Asp108, Asp112, 198 to 201, 246 to 250, and 336 to 337; these read RHYD, SWDKE, and RY. The DDXXD motif lies at 108–112; sequence DDLTD. Positions 345–744 are prenyltransferase; that stretch reads RREDIGKVNG…LHLITFQLKV (400 aa). A disordered region spans residues 399–422; the sequence is YTTMTPAETSSDDKKKKAKASHET. Basic and acidic residues predominate over residues 409-422; the sequence is SDDKKKKAKASHET. Isopentenyl diphosphate contacts are provided by Arg459 and His488. Mg(2+)-binding residues include Asp495 and Asp499. The short motif at 495–499 is the DDXXD element; it reads DDVQD. Residue Arg504 participates in dimethylallyl diphosphate binding. Arg505 provides a ligand contact to isopentenyl diphosphate. Residues Lys581, Thr582, and Gln617 each contribute to the dimethylallyl diphosphate site.

It in the N-terminal section; belongs to the terpene synthase family. This sequence in the C-terminal section; belongs to the FPP/GGPP synthase family. Hexamer. Mg(2+) serves as cofactor.

The catalysed reaction is isopentenyl diphosphate + (2E,6E)-farnesyl diphosphate = (2E,6E,10E)-geranylgeranyl diphosphate + diphosphate. It carries out the reaction (2E,6E,10E)-geranylgeranyl diphosphate = (5R,12R,14S)-dolasta-1(15),8-diene + diphosphate. It catalyses the reaction (2E,6E,10E)-geranylgeranyl diphosphate = delta-araneosene + diphosphate. Its function is as follows. Bifunctional terpene synthase involved in the biosynthesis of the diterpenes delta-araneosene and dolasta-1(15),8-diene. The C-terminal prenyltransferase domain of CgDS catalyzes formation of the universal precursor of diterpene, geranylgeranyl diphosphate (GGPP), whereas the N-terminal terpene cyclase domain catalyzes the cyclization of GGPP to the intermediate delta-araneosene that is further converted to dolasta-1(15),8-diene in a second cyclization event. In some cases the cyclization stops at the delta-araneosene stage. The sequence is that of Dolasta-1(15),8-diene synthase from Colletotrichum gloeosporioides (Anthracnose fungus).